Consider the following 99-residue polypeptide: uncharacterized protein (99 aa).

An N-terminal signal peptide occupies residues 1–17 (MMMNAFFPAMALIVLVG). A lipid anchor (N-palmitoyl cysteine) is attached at C18. A lipid anchor (S-diacylglycerol cysteine) is attached at C18.

It localises to the cell membrane. This is an uncharacterized protein from Escherichia coli O6:H1 (strain CFT073 / ATCC 700928 / UPEC).